Consider the following 133-residue polypeptide: Nickel-responsive regulator (133 aa).

Positions 76, 87, 89, and 95 each coordinate Ni(2+).

It belongs to the transcriptional regulatory CopG/NikR family. In terms of assembly, homotetramer. It depends on Ni(2+) as a cofactor.

In terms of biological role, transcriptional repressor of the nikABCDE operon. Is active in the presence of excessive concentrations of intracellular nickel. This Escherichia fergusonii (strain ATCC 35469 / DSM 13698 / CCUG 18766 / IAM 14443 / JCM 21226 / LMG 7866 / NBRC 102419 / NCTC 12128 / CDC 0568-73) protein is Nickel-responsive regulator.